A 178-amino-acid polypeptide reads, in one-letter code: Large ribosomal subunit protein uL6 (178 aa).

Belongs to the universal ribosomal protein uL6 family. As to quaternary structure, part of the 50S ribosomal subunit.

Functionally, this protein binds to the 23S rRNA, and is important in its secondary structure. It is located near the subunit interface in the base of the L7/L12 stalk, and near the tRNA binding site of the peptidyltransferase center. The polypeptide is Large ribosomal subunit protein uL6 (Lactococcus lactis subsp. cremoris (strain SK11)).